The sequence spans 432 residues: Trigger factor (432 aa).

One can recognise a PPIase FKBP-type domain in the interval 161–246; the sequence is EDRVTIDFTG…LKKVEERGLP (86 aa).

This sequence belongs to the FKBP-type PPIase family. Tig subfamily.

It localises to the cytoplasm. The catalysed reaction is [protein]-peptidylproline (omega=180) = [protein]-peptidylproline (omega=0). Involved in protein export. Acts as a chaperone by maintaining the newly synthesized protein in an open conformation. Functions as a peptidyl-prolyl cis-trans isomerase. The protein is Trigger factor of Salmonella choleraesuis (strain SC-B67).